The primary structure comprises 400 residues: Enolase (400 aa).

Glutamine 154 is a binding site for (2R)-2-phosphoglycerate. The Proton donor role is filled by glutamate 197. Residues aspartate 233, glutamate 274, and aspartate 301 each contribute to the Mg(2+) site. Residues lysine 326, arginine 355, serine 356, and lysine 377 each coordinate (2R)-2-phosphoglycerate. Lysine 326 acts as the Proton acceptor in catalysis.

This sequence belongs to the enolase family. It depends on Mg(2+) as a cofactor.

The protein localises to the cytoplasm. It localises to the secreted. Its subcellular location is the cell surface. It catalyses the reaction (2R)-2-phosphoglycerate = phosphoenolpyruvate + H2O. The protein operates within carbohydrate degradation; glycolysis; pyruvate from D-glyceraldehyde 3-phosphate: step 4/5. In terms of biological role, catalyzes the reversible conversion of 2-phosphoglycerate (2-PG) into phosphoenolpyruvate (PEP). It is essential for the degradation of carbohydrates via glycolysis. The sequence is that of Enolase from Picrophilus torridus (strain ATCC 700027 / DSM 9790 / JCM 10055 / NBRC 100828 / KAW 2/3).